Consider the following 359-residue polypeptide: Prostaglandin D2 receptor (359 aa).

Topologically, residues 1-21 are extracellular; the sequence is MKSPFYRCQNTTSVEKGNSAV. A glycan (N-linked (GlcNAc...) asparagine) is linked at N10. The helical transmembrane segment at 22-42 threads the bilayer; that stretch reads MGGVLFSTGLLGNLLALGLLA. Over 43-59 the chain is Cytoplasmic; sequence RSGLGWCSRRPLRPLPS. The chain crosses the membrane as a helical span at residues 60–80; it reads VFYMLVCGLTVTDLLGKCLLS. Residues 81–107 lie on the Extracellular side of the membrane; the sequence is PVVLAAYAQNRSLRVLAPALDNSLCQA. The N-linked (GlcNAc...) asparagine glycan is linked to N90. Residues C105 and C183 are joined by a disulfide bond. The helical transmembrane segment at 108–128 threads the bilayer; that stretch reads FAFFMSFFGLSSTLQLLAMAL. Topologically, residues 129 to 150 are cytoplasmic; sequence ECWLSLGHPFFYRRHITLRLGA. Residues 151–171 traverse the membrane as a helical segment; sequence LVAPVVSAFSLAFCALPFMGF. Over 172–195 the chain is Extracellular; it reads GKFVQYCPGTWCFIQMVHEEGSLS. The helical transmembrane segment at 196 to 216 threads the bilayer; that stretch reads VLGYSVLYSSLMALLVLATVL. Topologically, residues 217-262 are cytoplasmic; the sequence is CNLGAMRNLYAMHRRLQRHPRSCTRDCAEPRADGREASPQPLEELD. A helical membrane pass occupies residues 263–283; it reads HLLLLALMTVLFTMCSLPVIY. The Extracellular segment spans residues 284-310; sequence RAYYGAFKDVKEKNRTSEEAEDLRALR. A glycan (N-linked (GlcNAc...) asparagine) is linked at N297. A helical membrane pass occupies residues 311–331; that stretch reads FLSVISIVDPWIFIIFRSPVF. Residues 332–359 are Cytoplasmic-facing; the sequence is RIFFHKIFIRPLRYRSRCSNSTNMESSL.

The protein belongs to the G-protein coupled receptor 1 family. As to expression, expressed in retinal choroid, ciliary epithelium, longitudinal and circular ciliary muscles, iris, small intestine and platelet membranes.

The protein localises to the cell membrane. Receptor for prostaglandin D2 (PGD2). The activity of this receptor is mainly mediated by G(s) proteins that stimulate adenylate cyclase, resulting in an elevation of intracellular cAMP. A mobilization of calcium is also observed, but without formation of inositol 1,4,5-trisphosphate. Involved in PLA2G3-dependent maturation of mast cells. PLA2G3 is secreted by immature mast cells and acts on nearby fibroblasts upstream to PTDGS to synthesize PGD2, which in turn promotes mast cell maturation and degranulation via PTGDR. The polypeptide is Prostaglandin D2 receptor (PTGDR) (Homo sapiens (Human)).